We begin with the raw amino-acid sequence, 102 residues long: NADH-quinone oxidoreductase subunit K (102 aa).

3 consecutive transmembrane segments (helical) span residues 6–26 (LEHG…GLMV), 30–50 (ILFV…AFVV), and 62–82 (VMFI…LAIL).

This sequence belongs to the complex I subunit 4L family. NDH-1 is composed of 13 different subunits. Subunits NuoA, H, J, K, L, M, N constitute the membrane sector of the complex.

It localises to the cell inner membrane. The enzyme catalyses a quinone + NADH + 5 H(+)(in) = a quinol + NAD(+) + 4 H(+)(out). Functionally, NDH-1 shuttles electrons from NADH, via FMN and iron-sulfur (Fe-S) centers, to quinones in the respiratory chain. The immediate electron acceptor for the enzyme in this species is believed to be ubiquinone. Couples the redox reaction to proton translocation (for every two electrons transferred, four hydrogen ions are translocated across the cytoplasmic membrane), and thus conserves the redox energy in a proton gradient. The sequence is that of NADH-quinone oxidoreductase subunit K from Pseudomonas syringae pv. syringae (strain B728a).